A 480-amino-acid chain; its full sequence is MFIGIAYLGGDRQMDELPDHLVWDILSKLHTTDDRNSLSLSCKRFFSLDNEQRYSLRIGCGLVPASDALLSLCRRFPNLSKVEIIYSGWMSKLGKQVDDQGLLVLTTNCHSLTDLTLSFCTFITDVGIGHLSSCPELSSLKLNFAPRITGCGVLSLAVGCKKLRRLHLIRCLNVASVEWLEYFGKLETLEELCIKNCRAIGEGDLIKLRNSWRKLTSLQFEVDANYRYMKVYDQLDVERWPKQLVPCDSLVELSLGNCIIAPGRGLACVLRNCKNLEKLHLDMCTGVSDSDIIALVQKASHLRSISLRVPSDFTLPLLNNITLRLTDESLSAIAQHCSKLESFKISFSDGEFPSLFSFTLQGIITLIQKCPVRELSLDHVCVFNDMGMEALCSAQKLEILELVHCQEVSDEGLILVSQFPSLNVLKLSKCLGVTDDGMRPLVGSHKLELLVVEDCPQVSRRGVHGAATSVSFKQDLSWMY.

The 48-residue stretch at 11-58 folds into the F-box domain; the sequence is DRQMDELPDHLVWDILSKLHTTDDRNSLSLSCKRFFSLDNEQRYSLRI. LRR repeat units follow at residues 61–86, 94–119, 120–144, 145–170, 171–196, 197–222, 229–257, 258–283, 284–309, 322–347, 355–379, 380–404, 405–429, 430–454, and 455–480; these read GLVP…EIIY, GKQV…TLSF, CTFI…KLNF, APRI…HLIR, CLNV…CIKN, CRAI…QFEV, MKVY…SLGN, CIIA…HLDM, CTGV…SLRV, TLRL…KISF, LFSF…SLDH, VCVF…ELVH, CQEV…KLSK, CLGV…VVED, and CPQV…SWMY.

This chain is F-box/LRR-repeat protein 14 (FBL14), found in Arabidopsis thaliana (Mouse-ear cress).